The following is a 593-amino-acid chain: ETS-related transcription factor Elf-2 (593 aa).

The interval 1 to 34 (MASAVVDSGGSALELPSDGGENQEGGDTGPDCPA) is disordered. Position 107 is a phosphoserine (S107). The tract at residues 146-199 (VEVSTEESEPMDASPIPTSPDSHEPMKKKKVGRKPKTQQSPVSNGSPELGIKKK) is disordered. The span at 171-181 (MKKKKVGRKPK) shows a compositional bias: basic residues. Phosphothreonine is present on T182. Positions 182–191 (TQQSPVSNGS) are enriched in polar residues. 2 positions are modified to phosphoserine: S185 and S191. Residues 208-290 (TYLWEFLLDL…EGQRLVYQFK (83 aa)) constitute a DNA-binding region (ETS). Residues 362-383 (TSPTHDGSSRSPTTTAPVSAAA) form a disordered region. S363 and S372 each carry phosphoserine. The span at 370-383 (SRSPTTTAPVSAAA) shows a compositional bias: low complexity. T376 carries the phosphothreonine modification. A Phosphoserine modification is found at S432. R496 bears the Omega-N-methylarginine mark. T523 is modified (phosphothreonine). Residue K538 forms a Glycyl lysine isopeptide (Lys-Gly) (interchain with G-Cter in SUMO2) linkage.

It belongs to the ETS family. As to quaternary structure, interacts with LIM domains of LMO2. Interacts via its N-terminal region with RUNX1. As to expression, expressed in all tissues examined. Highest levels in thymocytes and bone marrow.

It is found in the nucleus. In terms of biological role, probably transcriptionally activates the LYN and BLK promoters and acts synergistically with RUNX1 to transactivate the BLK promoter. This chain is ETS-related transcription factor Elf-2, found in Mus musculus (Mouse).